Reading from the N-terminus, the 498-residue chain is MRINPTNSGFGVSTIGEKNLGRIAQLIGPVLDVVFPLGKMPNNYNALVVKGRDTVDQQINVTCEVQQLLGNNRVRALAMSATDGLTRGMEVIDTGAALSVPVGGATLGRIFNVLGEPVDNLGPVDTRTTSPIHRSAPAFIQLDTKLSIFETGIKVVDLLAPYRRGGKIGLFGGAGVGKTVLIMELINNIAKAHGGVSVFGGVGERTREGNDLYMEMKESGVINEKNIAESKVALVYGQMNEPPGARMRVGLTALTMAEYFRDVNEQDVLLFIDNIFRFVQAGSEVSALLGRMPSAVGYQPTLSTEMGSLQERITSTKEGSITSIQAVYVPADDLTDPAPATTFAHLDATTVLSRGLAAKGIYPAVDPLDSTSTMLQPRIVGEEHYETAQRVKQTLQRYKELQDIIAILGLDELSEEDRLTVARARKIERFLSQPFFVAEVFTGSPGKYVGLTETIRGFQLILSGELDGLPEQAFYLVGNIDEATAKAMNLEKESNLKK.

172–179 (GGAGVGKT) serves as a coordination point for ATP.

It belongs to the ATPase alpha/beta chains family. In terms of assembly, F-type ATPases have 2 components, CF(1) - the catalytic core - and CF(0) - the membrane proton channel. CF(1) has five subunits: alpha(3), beta(3), gamma(1), delta(1), epsilon(1). CF(0) has four main subunits: a(1), b(1), b'(1) and c(9-12).

It localises to the plastid. The protein localises to the chloroplast thylakoid membrane. The enzyme catalyses ATP + H2O + 4 H(+)(in) = ADP + phosphate + 5 H(+)(out). Functionally, produces ATP from ADP in the presence of a proton gradient across the membrane. The catalytic sites are hosted primarily by the beta subunits. This chain is ATP synthase subunit beta, chloroplastic, found in Whiteheadia bifolia (Elephants ears).